The chain runs to 162 residues: Interleukin-15 (162 aa).

A signal peptide spans 1 to 29; that stretch reads MRISKPHLRITSIQCYVCLLLNTHFLTEA. Positions 30–48 are excised as a propeptide; that stretch reads GIRVFILGCISAGIPKTEA. 2 disulfides stabilise this stretch: Cys83-Cys133 and Cys90-Cys136. 3 N-linked (GlcNAc...) asparagine glycosylation sites follow: Asn119, Asn127, and Asn143.

The protein belongs to the IL-15/IL-21 family.

Its subcellular location is the secreted. Cytokine that plays a major role in the development of inflammatory and protective immune responses to microbial invaders and parasites by modulating immune cells of both the innate and adaptive immune systems. Stimulates the proliferation of natural killer cells, T-cells and B-cells and promotes the secretion of several cytokines. In monocytes, induces the production of IL8 and monocyte chemotactic protein 1/CCL2, two chemokines that attract neutrophils and monocytes respectively to sites of infection. Unlike most cytokines, which are secreted in soluble form, IL15 is expressed in association with its high affinity IL15RA on the surface of IL15-producing cells and delivers signals to target cells that express IL2RB and IL2RG receptor subunits. Binding to its receptor triggers the phosphorylation of JAK1 and JAK3 and the recruitment and subsequent phosphorylation of signal transducer and activator of transcription-3/STAT3 and STAT5. In mast cells, induces the rapid tyrosine phosphorylation of STAT6 and thereby controls mast cell survival and release of cytokines such as IL4. This chain is Interleukin-15 (IL15), found in Marmota monax (Woodchuck).